Here is a 415-residue protein sequence, read N- to C-terminus: Stimulator of interferon genes protein (415 aa).

The TIR domain maps to 29 to 163 (HVYHAFISYC…DIIQAISKPE (135 aa)). E104 is an active-site residue. A 2',3'-cGAMP-binding site is contributed by R256. The segment at 387–415 (KSPSSTNMVKSEPNIYREESGKTKSVERG) is disordered. Basic and acidic residues predominate over residues 401 to 415 (IYREESGKTKSVERG).

In the N-terminal section; belongs to the Toll-like receptor family. This sequence in the C-terminal section; belongs to the TMEM173 family. In terms of assembly, homodimer.

It catalyses the reaction NAD(+) + H2O = ADP-D-ribose + nicotinamide + H(+). Its function is as follows. Sensor of cytosolic DNA from bacteria and viruses that promotes autophagy. Binds c-di-AMP, 2'3'-cGAMP, 3'3'-cGAMP and to a lesser extent c-di-GMP. Nucleotide binding has not been seen to stimulate NAD(+) hydrolase activity. This is Stimulator of interferon genes protein from Magallana gigas (Pacific oyster).